The chain runs to 149 residues: Squidulin (149 aa).

Ala1 bears the N-acetylalanine mark. 4 EF-hand domains span residues 7-42 (KQIA…LGRT), 43-78 (PSDA…QMGP), 80-115 (DPEK…FSDE), and 117-149 (LTSE…MTPK). Ca(2+) contacts are provided by Asp20, Asp22, Asp24, Gln26, Glu31, Asp56, Asp58, Asn60, Thr62, Glu67, Asp93, Asp95, Asn97, Glu104, Asp130, Asp132, Asp134, Met136, and Glu141.

This sequence belongs to the calmodulin family.

Its function is as follows. Not known. This protein has four functional calcium-binding sites. This Doryteuthis pealeii (Longfin inshore squid) protein is Squidulin.